The following is a 153-amino-acid chain: T cell receptor delta constant (153 aa).

A glycan (N-linked (GlcNAc...) asparagine) is linked at Asn-14. Cys-20 and Cys-71 are disulfide-bonded. Residue Asn-77 is glycosylated (N-linked (GlcNAc...) asparagine). Basic and acidic residues predominate over residues 85-102; it reads FEVKTDSTDHVKPKETEN. Positions 85-112 are disordered; it reads FEVKTDSTDHVKPKETENTKQPSKSCHK. The chain crosses the membrane as a helical span at residues 130–152; the sequence is LGLRMLFAKTVAVNFLLTAKLFF.

In terms of assembly, gamma-delta TR is a heterodimer composed of a gamma and delta chain; disulfide-linked. The gamma-delta TR is associated with the transmembrane signaling CD3 coreceptor proteins following the stoichiometry: a single gamma-delta TR heterodimer associates with one CD3D-CD3E heterodimer, one CD3G-CD3E heterodimer and one CD247 homodimer forming a stable octameric structure. Upon activation, gamma-delta TR complex associates with FCER1G to initiate intracellular signaling.

Its subcellular location is the cell membrane. Its function is as follows. Constant region of T cell receptor (TR) delta chain that participates in the antigen recognition. Gamma-delta TRs recognize a variety of self and foreign non-peptide antigens frequently expressed at the epithelial boundaries between the host and external environment, including endogenous lipids presented by MH-like protein CD1D and phosphoantigens presented by butyrophilin-like molecule BTN3A1. Upon antigen recognition induces rapid, innate-like immune responses involved in pathogen clearance and tissue repair. Binding of gamma-delta TR complex to antigen triggers phosphorylation of immunoreceptor tyrosine-based activation motifs (ITAMs) in the CD3 chains by the LCK and FYN kinases, allowing the recruitment, phosphorylation, and activation of ZAP70 that facilitates phosphorylation of the scaffolding proteins LCP2 and LAT. This lead to the formation of a supramolecular signalosome that recruits the phospholipase PLCG1, resulting in calcium mobilization and ERK activation, ultimately leading to T cell expansion and differentiation into effector cells. Gamma-delta TRs are produced through somatic rearrangement of a limited repertoire of variable (V), diversity (D), and joining (J) genes. The potential diversity of gamma-delta TRs is conferred by the unique ability to rearrange (D) genes in tandem and to utilize all three reading frames. The combinatorial diversity is considerably increased by the sequence exonuclease trimming and random nucleotide (N) region additions which occur during the V-(D)-J rearrangements. The protein is T cell receptor delta constant of Homo sapiens (Human).